The primary structure comprises 153 residues: 6,7-dimethyl-8-ribityllumazine synthase (153 aa).

Residues phenylalanine 22, 56-58 (AFE), and 80-82 (TVI) each bind 5-amino-6-(D-ribitylamino)uracil. 85 to 86 (AT) is a binding site for (2S)-2-hydroxy-3-oxobutyl phosphate. Residue histidine 88 is the Proton donor of the active site. Residue phenylalanine 113 participates in 5-amino-6-(D-ribitylamino)uracil binding. (2S)-2-hydroxy-3-oxobutyl phosphate is bound at residue arginine 127.

This sequence belongs to the DMRL synthase family.

The catalysed reaction is (2S)-2-hydroxy-3-oxobutyl phosphate + 5-amino-6-(D-ribitylamino)uracil = 6,7-dimethyl-8-(1-D-ribityl)lumazine + phosphate + 2 H2O + H(+). It functions in the pathway cofactor biosynthesis; riboflavin biosynthesis; riboflavin from 2-hydroxy-3-oxobutyl phosphate and 5-amino-6-(D-ribitylamino)uracil: step 1/2. Functionally, catalyzes the formation of 6,7-dimethyl-8-ribityllumazine by condensation of 5-amino-6-(D-ribitylamino)uracil with 3,4-dihydroxy-2-butanone 4-phosphate. This is the penultimate step in the biosynthesis of riboflavin. The protein is 6,7-dimethyl-8-ribityllumazine synthase of Clostridium perfringens (strain 13 / Type A).